The chain runs to 342 residues: Polyprenyl transferase trt2 (342 aa).

9 helical membrane-spanning segments follow: residues 71 to 91 (VVGV…TVLL), 95 to 115 (IILS…NDLI), 141 to 161 (AALL…LLPS), 163 to 183 (CTVE…GKRF), 187 to 207 (PQLI…SLEV), 216 to 236 (TLSM…VYAC), 261 to 278 (LAYG…LGGV), 282 to 304 (LGLP…FLSV), and 319 to 339 (AKSS…LEYL).

It belongs to the UbiA prenyltransferase family. It depends on Mg(2+) as a cofactor.

Its subcellular location is the membrane. It carries out the reaction 3,5-dimethylorsellinate + (2E,6E)-farnesyl diphosphate = (3R)-3-farnesyl-6-hydroxy-2,3,5-trimethyl-4-oxocyclohexa-1,5-diene-1-carboxylate + diphosphate + H(+). Its pathway is secondary metabolite biosynthesis; terpenoid biosynthesis. Polyprenyl transferase; part of the gene cluster that mediates the biosynthesis of terretonin, a fungal meroterpenoid that acts as a mycotoxin. The first step of the pathway is the synthesis of 3,5-dimethylorsellinic acid (DMOA) by the polyketide synthase trt4. DMOA is then prenylated into farnesyl-DMOA by the polyprenyl transferase trt2. Methylation by the methyltransferase trt5 then leads to farnesyl-DMOA methyl ester which is further subject to epoxidation by the FAD-dependent monooxygenase trt8 to yield epoxyfarnesyl-DMOA methyl ester. Cyclization of epoxyfarnesyl-DMOA methyl ester by the terpene cyclase trt1 leads to a tetracycle intermediate which is in turn converted to preterretonin. Dehydrogenase trt9 comes next to transform preterretonin to preterrenoid. The FAD-dependent monooxygenase trt3 is then required for the C-hydroxylation at C16 of preterrenoid to yield terrenoid. The cytochrome P450 trt6 catalyzes three successive oxidations to transform terrenoid into an unstable intermediate, which then undergoes the D-ring expansion and unusual rearrangement of the methoxy group to afford the core skeleton of terretonin. Trt14 catalyzes the D-ring expansion of terretonin involving intramolecular methoxy rearrangement as well as the hydrolysis of the expanded D-ring and the methyl ester moiety. Finally, the nonheme iron-dependent dioxygenase trt7 accomplishes the last two oxidation reactions steps to complete the biosynthesis of terretonin. Terretonin C is produced via spontaneous decarboxylation of the terretonin precursor. Another shunt product of the terretonin biosynthesis is dihydrofarnesyl-DMOA, derived from epoxyfarnesyl-DMOA through hydrolysis of the epoxide. This Aspergillus terreus (strain NIH 2624 / FGSC A1156) protein is Polyprenyl transferase trt2.